The primary structure comprises 77 residues: Chassatide C13 (77 aa).

Positions 1 to 24 (MAKFATQLLLFVLIASLVMLEVHA) are cleaved as a signal peptide. Residues 25–44 (SNTFQVPDLGKRLLMNRDPN) constitute a propeptide, removed in mature form. Residues 45 to 75 (GFPCAESCVYIPCTVTALLGCSCRNRVCYRN) constitute a cross-link (cyclopeptide (Gly-Asn)). 3 disulfide bridges follow: Cys-48-Cys-65, Cys-52-Cys-67, and Cys-57-Cys-72. A propeptide spans 76-77 (EL) (removed in mature form).

This is a cyclic peptide. Expressed in fruit and pedicel but not in root, leaf and stem (at protein level).

Its function is as follows. Probably participates in a plant defense mechanism. The polypeptide is Chassatide C13 (Chassalia chartacea (Chassalia curviflora)).